The chain runs to 712 residues: Polyribonucleotide nucleotidyltransferase (712 aa).

Mg(2+) is bound by residues D493 and D499. Residues P560 to I622 form the KH domain. The S1 motif domain occupies G632–K700.

The protein belongs to the polyribonucleotide nucleotidyltransferase family. It depends on Mg(2+) as a cofactor.

Its subcellular location is the cytoplasm. It catalyses the reaction RNA(n+1) + phosphate = RNA(n) + a ribonucleoside 5'-diphosphate. Involved in mRNA degradation. Catalyzes the phosphorolysis of single-stranded polyribonucleotides processively in the 3'- to 5'-direction. The polypeptide is Polyribonucleotide nucleotidyltransferase (Salinibacter ruber (strain DSM 13855 / M31)).